The sequence spans 159 residues: Large ribosomal subunit protein uL11 (159 aa).

The protein belongs to the universal ribosomal protein uL11 family. Part of the ribosomal stalk of the 50S ribosomal subunit. Interacts with L10 and the large rRNA to form the base of the stalk. L10 forms an elongated spine to which L12 dimers bind in a sequential fashion forming a multimeric L10(L12)X complex.

Functionally, forms part of the ribosomal stalk which helps the ribosome interact with GTP-bound translation factors. The sequence is that of Large ribosomal subunit protein uL11 from Methanococcus maripaludis (strain C5 / ATCC BAA-1333).